We begin with the raw amino-acid sequence, 527 residues long: Triostin synthetase I (527 aa).

187–188 contacts ATP; the sequence is GG. 230–231 serves as a coordination point for substrate; sequence HQ. ATP is bound by residues 300–302, D406, R421, and K512; that span reads SAP. Residue K512 coordinates substrate.

It belongs to the ATP-dependent AMP-binding enzyme family. Monomer.

In terms of biological role, involved in triostin biosynthesis. Activates quinoxaline-2-carboxylic acid (QA) via catalysis of the ATP-pyrophosphate exchange reaction dependent on QA, and the formation of the corresponding adenylate. Also activates structural analogs of QA such as quinoline-2-carboxylic acid and thieno[3,2-b]pyridine-5-carboxylic acid, but not quinoline-3-carboxylic acid, quinoline-4-carboxylic acid, pyridine-2-carboxylic acid or 2-pyrazinecarboxylic acid. This Streptomyces triostinicus protein is Triostin synthetase I (trsA).